The primary structure comprises 227 residues: MNCLEKITNEYGQKTASRLEQFVKLIEEENKKINLTSFEGQRLWQEGIYESIKCLEPFVKSNDSLLDIGAGVGFPSVPFLIVNPEVKLTIIESNKKRVLFLEKVKKDLNLSFEIFNGRVENFNKEIHFDFITARALAPLNILMELTINLGSILPKPTNYIFVKGANYLSELNEAQNAIKILKLKVFDLKKIDVFFDKNIFMIHYIKTANVSKEYPRAWDKIIKKPIR.

S-adenosyl-L-methionine-binding positions include glycine 69, phenylalanine 74, 119-120, and arginine 134; that span reads VE.

Belongs to the methyltransferase superfamily. RNA methyltransferase RsmG family.

The protein resides in the cytoplasm. In terms of biological role, specifically methylates the N7 position of a guanine in 16S rRNA. This chain is Ribosomal RNA small subunit methyltransferase G, found in Mycoplasmopsis pulmonis (strain UAB CTIP) (Mycoplasma pulmonis).